Consider the following 122-residue polypeptide: Large ribosomal subunit protein bL17 (122 aa).

This sequence belongs to the bacterial ribosomal protein bL17 family. As to quaternary structure, part of the 50S ribosomal subunit. Contacts protein L32.

The chain is Large ribosomal subunit protein bL17 from Wigglesworthia glossinidia brevipalpis.